Here is a 264-residue protein sequence, read N- to C-terminus: Thymidylate synthase (264 aa).

R21 serves as a coordination point for dUMP. H51 serves as a coordination point for (6R)-5,10-methylene-5,6,7,8-tetrahydrofolate. Position 126–127 (126–127 (RR)) interacts with dUMP. C146 (nucleophile) is an active-site residue. DUMP contacts are provided by residues 166-169 (RSCD), N177, and 207-209 (HLY). D169 contacts (6R)-5,10-methylene-5,6,7,8-tetrahydrofolate. A263 is a (6R)-5,10-methylene-5,6,7,8-tetrahydrofolate binding site.

It belongs to the thymidylate synthase family. Bacterial-type ThyA subfamily. Homodimer.

The protein resides in the cytoplasm. The enzyme catalyses dUMP + (6R)-5,10-methylene-5,6,7,8-tetrahydrofolate = 7,8-dihydrofolate + dTMP. It participates in pyrimidine metabolism; dTTP biosynthesis. In terms of biological role, catalyzes the reductive methylation of 2'-deoxyuridine-5'-monophosphate (dUMP) to 2'-deoxythymidine-5'-monophosphate (dTMP) while utilizing 5,10-methylenetetrahydrofolate (mTHF) as the methyl donor and reductant in the reaction, yielding dihydrofolate (DHF) as a by-product. This enzymatic reaction provides an intracellular de novo source of dTMP, an essential precursor for DNA biosynthesis. The chain is Thymidylate synthase from Salmonella typhi.